Reading from the N-terminus, the 181-residue chain is Adenine phosphoribosyltransferase (181 aa).

The protein belongs to the purine/pyrimidine phosphoribosyltransferase family. As to quaternary structure, homodimer.

Its subcellular location is the cytoplasm. It catalyses the reaction AMP + diphosphate = 5-phospho-alpha-D-ribose 1-diphosphate + adenine. Its pathway is purine metabolism; AMP biosynthesis via salvage pathway; AMP from adenine: step 1/1. Functionally, catalyzes a salvage reaction resulting in the formation of AMP, that is energically less costly than de novo synthesis. This Shewanella amazonensis (strain ATCC BAA-1098 / SB2B) protein is Adenine phosphoribosyltransferase.